The sequence spans 315 residues: Glycine--tRNA ligase alpha subunit (315 aa).

The protein belongs to the class-II aminoacyl-tRNA synthetase family. In terms of assembly, tetramer of two alpha and two beta subunits.

The protein localises to the cytoplasm. It carries out the reaction tRNA(Gly) + glycine + ATP = glycyl-tRNA(Gly) + AMP + diphosphate. In Pseudomonas putida (strain GB-1), this protein is Glycine--tRNA ligase alpha subunit.